The following is a 95-amino-acid chain: Cell division topological specificity factor (95 aa).

This sequence belongs to the MinE family.

In terms of biological role, prevents the cell division inhibition by proteins MinC and MinD at internal division sites while permitting inhibition at polar sites. This ensures cell division at the proper site by restricting the formation of a division septum at the midpoint of the long axis of the cell. The polypeptide is Cell division topological specificity factor (Microcystis aeruginosa (strain NIES-843 / IAM M-2473)).